Here is a 70-residue protein sequence, read N- to C-terminus: UPF0426 protein ssl0294 (70 aa).

The protein belongs to the UPF0426 family.

This chain is UPF0426 protein ssl0294, found in Synechocystis sp. (strain ATCC 27184 / PCC 6803 / Kazusa).